A 970-amino-acid polypeptide reads, in one-letter code: Rho GTPase-activating protein gacK (970 aa).

The N-terminal stretch at 1–20 (MTLVYEKSSFVLIMAQIAEA) is a signal peptide. Disordered regions lie at residues 30–49 (SNDL…SAAI), 258–285 (STCS…INQN), 312–446 (EITI…FSPT), 487–550 (STSN…NNNN), and 860–886 (TASS…NDDP). Low complexity-rich tracts occupy residues 35–49 (STSA…SAAI) and 258–269 (STCSLSSNASNN). Residues 321–333 (IPLPPQSSSPPPT) show a composition bias toward pro residues. Residues 334–383 (RNNQSSPSPSSPQQQNIMPTPPSTSLTPPQSPTLSPSSSTHSTPTQTTTT) show a composition bias toward low complexity. Residues 392–406 (PSTISQNNARKTQIP) show a composition bias toward polar residues. Residues 407-426 (TTTTTTTTTTTTTSTTSTTS) show a composition bias toward low complexity. Residues 427 to 446 (PNPVVNNKNLNTPSSSFSPT) are compositionally biased toward polar residues. The Rho-GAP domain occupies 754-970 (IEDSELVEDN…LELIQFNKSL (217 aa)). The span at 860–885 (TASSAATANSSSSGSGNGNSSPNNDD) shows a compositional bias: low complexity.

The protein resides in the cytoplasm. Its function is as follows. Rho GTPase-activating protein involved in the signal transduction pathway. This chain is Rho GTPase-activating protein gacK (gacK), found in Dictyostelium discoideum (Social amoeba).